We begin with the raw amino-acid sequence, 112 residues long: Nitrogen regulatory protein GlnK2 (112 aa).

Residues Thr-29, 38–39 (QQ), Val-64, and 87–90 (GDGK) contribute to the ADP site. ATP is bound by residues Thr-29, 38-39 (QQ), Val-64, 87-90 (GDGK), and 101-103 (RIR).

This sequence belongs to the P(II) protein family. Homotrimer. Interacts and forms a complex with Amt2.

It is found in the cytoplasm. Binding of adenosine nucleotides results in distinct, cooperative behavior for ATP and ADP. GlnK2 is completely insensitive to 2-oxoglutarate at a low level of intracellular nitrogen. Functionally, involved in the regulation of nitrogen metabolism. Regulates the activity of its targets by protein-protein interaction in response to the nitrogen status of the cell. Regulates the activity of the ammonia channel Amt2 via direct interaction. The chain is Nitrogen regulatory protein GlnK2 from Archaeoglobus fulgidus (strain ATCC 49558 / DSM 4304 / JCM 9628 / NBRC 100126 / VC-16).